Consider the following 279-residue polypeptide: 5'-nucleotidase SurE (279 aa).

Positions 28, 29, 59, and 113 each coordinate a divalent metal cation.

This sequence belongs to the SurE nucleotidase family. Requires a divalent metal cation as cofactor.

It localises to the cytoplasm. The catalysed reaction is a ribonucleoside 5'-phosphate + H2O = a ribonucleoside + phosphate. Nucleotidase that shows phosphatase activity on nucleoside 5'-monophosphates. The protein is 5'-nucleotidase SurE of Methanospirillum hungatei JF-1 (strain ATCC 27890 / DSM 864 / NBRC 100397 / JF-1).